We begin with the raw amino-acid sequence, 194 residues long: Ribosome maturation factor RimM (194 aa).

One can recognise a PRC barrel domain in the interval 92 to 190 (DDGYYDHELI…ALVVTPPEGL (99 aa)).

This sequence belongs to the RimM family. In terms of assembly, binds ribosomal protein uS19.

It localises to the cytoplasm. Functionally, an accessory protein needed during the final step in the assembly of 30S ribosomal subunit, possibly for assembly of the head region. Essential for efficient processing of 16S rRNA. May be needed both before and after RbfA during the maturation of 16S rRNA. It has affinity for free ribosomal 30S subunits but not for 70S ribosomes. The protein is Ribosome maturation factor RimM of Corynebacterium urealyticum (strain ATCC 43042 / DSM 7109).